The following is an 84-amino-acid chain: uncharacterized protein (84 aa).

The chain crosses the membrane as a helical span at residues 25–45; sequence ILMTVAGFIIAFAILVFQISF.

The protein localises to the membrane. This is an uncharacterized protein from Bacillus anthracis.